The sequence spans 942 residues: Valine--tRNA ligase (942 aa).

A 'HIGH' region motif is present at residues 43–53; the sequence is PNVTGTLHMGH. The 'KMSKS' region motif lies at 551–555; that stretch reads KMSKS. Lysine 554 provides a ligand contact to ATP. Residues 876–942 adopt a coiled-coil conformation; sequence EGLVDLDAER…AGLREQRAKL (67 aa).

The protein belongs to the class-I aminoacyl-tRNA synthetase family. ValS type 1 subfamily. In terms of assembly, monomer.

It is found in the cytoplasm. It carries out the reaction tRNA(Val) + L-valine + ATP = L-valyl-tRNA(Val) + AMP + diphosphate. Catalyzes the attachment of valine to tRNA(Val). As ValRS can inadvertently accommodate and process structurally similar amino acids such as threonine, to avoid such errors, it has a 'posttransfer' editing activity that hydrolyzes mischarged Thr-tRNA(Val) in a tRNA-dependent manner. This chain is Valine--tRNA ligase, found in Stenotrophomonas maltophilia (strain R551-3).